Reading from the N-terminus, the 62-residue chain is SPbeta prophage-derived uncharacterized protein YonU (62 aa).

The stretch at 1–32 (MEKKFLDAIQQLTKELEMLKKDIDSIKEATVR) forms a coiled coil.

This is SPbeta prophage-derived uncharacterized protein YonU (yonU) from Bacillus subtilis (strain 168).